The following is a 519-amino-acid chain: Acetylcholine receptor subunit gamma (519 aa).

The first 22 residues, 1 to 22 (MHGGQGPQLLLLLLATCLGAQS), serve as a signal peptide directing secretion. Topologically, residues 23–240 (RNQEERLLAD…VVFYLLIQRK (218 aa)) are extracellular. Residues N52 and N163 are each glycosylated (N-linked (GlcNAc...) asparagine). A disulfide bridge connects residues C150 and C164. 3 consecutive transmembrane segments (helical) span residues 241–265 (PLFYVINIIVPCVLISSVAILIYFL), 274–292 (CTVATNVLLAQTVFLFLVA), and 308–329 (YLTFLMVVTILIVVNSVVVLNV). At 330-476 (SLRSPHTHSM…WLLVGRVLDR (147 aa)) the chain is on the cytoplasmic side. A helical membrane pass occupies residues 477–497 (VCFLAMLSLFICGTAGIFLMA).

This sequence belongs to the ligand-gated ion channel (TC 1.A.9) family. Acetylcholine receptor (TC 1.A.9.1) subfamily. Gamma/CHRNG sub-subfamily. As to quaternary structure, pentamer of two alpha chains, and one each of the beta, delta, and gamma (in immature muscle) or epsilon (in mature muscle) chains.

The protein resides in the postsynaptic cell membrane. It is found in the cell membrane. It catalyses the reaction K(+)(in) = K(+)(out). The catalysed reaction is Na(+)(in) = Na(+)(out). After binding acetylcholine, the AChR responds by an extensive change in conformation that affects all subunits and leads to opening of an ion-conducting channel across the plasma membrane. This Rattus norvegicus (Rat) protein is Acetylcholine receptor subunit gamma (Chrng).